The chain runs to 196 residues: Probable thymidylate kinase (196 aa).

Residue 7-14 (GIDGSGKS) coordinates ATP.

Belongs to the thymidylate kinase family.

It carries out the reaction dTMP + ATP = dTDP + ADP. In Natronomonas pharaonis (strain ATCC 35678 / DSM 2160 / CIP 103997 / JCM 8858 / NBRC 14720 / NCIMB 2260 / Gabara) (Halobacterium pharaonis), this protein is Probable thymidylate kinase.